Consider the following 339-residue polypeptide: Phosphate acyltransferase (339 aa).

The protein belongs to the PlsX family. As to quaternary structure, homodimer. Probably interacts with PlsY.

It is found in the cytoplasm. The enzyme catalyses a fatty acyl-[ACP] + phosphate = an acyl phosphate + holo-[ACP]. Its pathway is lipid metabolism; phospholipid metabolism. Functionally, catalyzes the reversible formation of acyl-phosphate (acyl-PO(4)) from acyl-[acyl-carrier-protein] (acyl-ACP). This enzyme utilizes acyl-ACP as fatty acyl donor, but not acyl-CoA. This Clostridium perfringens (strain SM101 / Type A) protein is Phosphate acyltransferase.